A 100-amino-acid chain; its full sequence is Small ribosomal subunit protein uS14 (100 aa).

It belongs to the universal ribosomal protein uS14 family. As to quaternary structure, part of the 30S ribosomal subunit. Contacts proteins S3 and S10.

Binds 16S rRNA, required for the assembly of 30S particles and may also be responsible for determining the conformation of the 16S rRNA at the A site. The protein is Small ribosomal subunit protein uS14 of Prochlorococcus marinus subsp. pastoris (strain CCMP1986 / NIES-2087 / MED4).